Consider the following 471-residue polypeptide: MAESNSWRSHRESDGNRSIPNGDDARNVRETGVQTDAKVQGQGPRLSKANLFTLLSLWMELFPKREACQQENDAAGVSGLVVVHECRVLGLHCSSAQLHAGQVAVVKHGPRLKSCELYFSRKPCSTCLKMLINAGVSRISYWPGDAELSLLSESLHHGSSSALQEAVLDATAAERLKSNSRPHISVLLQPLDCTVLQFLDETSQNADFLGKIVADNPALDTGDIYRREFWNNSDNFLEKFFISDEERHKYVLNKMGLENFCMEPNFSNLRQHMRNLIRILASVASSVPALLEDYGFFMREPVGMGSPGLPQGVIRHCVIQARLLACRTEDPKVGVGAVIWAEGKQSQCDGTGQLYLVGCGYNAYPVGSQYAEYPQMDHKQEERQNRKYRYILHAEQNALTFRSAEIKAEDNTMMFVTKCPCDECVPLIGCAGIKQIYTTDLDSNKVKHDISYLRFNKLNGVQKFIVSVREK.

Residues 1 to 27 (MAESNSWRSHRESDGNRSIPNGDDARN) form a disordered region. 2 consecutive CMP/dCMP-type deaminase domains span residues 57–153 (LWME…LLSE) and 312–460 (GVIR…KLNG). Positions 99, 124, 127, and 393 each coordinate Zn(2+). Glu-395 functions as the Proton donor in the catalytic mechanism. Residues Cys-421 and Cys-424 each coordinate Zn(2+).

The protein belongs to the cytidine and deoxycytidylate deaminase family. The cofactor is Zn(2+).

The catalysed reaction is 2'-deoxycytidine + H2O + H(+) = 2'-deoxyuridine + NH4(+). It carries out the reaction cytidine + H2O + H(+) = uridine + NH4(+). Catalyzes the deamination of cytidine and deoxycytidine into uridine and deoxyuridine, respectively. In Danio rerio (Zebrafish), this protein is Cytidine and dCMP deaminase domain-containing protein 1 (cdadc1).